The chain runs to 512 residues: 3-ketoacyl-CoA synthase 9 (512 aa).

Transmembrane regions (helical) follow at residues leucine 44–isoleucine 64 and leucine 83–serine 103. Positions tyrosine 100–leucine 389 constitute an FAE domain. Catalysis depends on residues cysteine 244, histidine 323, histidine 407, histidine 411, histidine 440, and asparagine 444.

This sequence belongs to the thiolase-like superfamily. Chalcone/stilbene synthases family. As to expression, expressed in seedlings, stems, leaves, flowers and siliques. Expressed in roots, leaves, and stems, including epidermis, silique walls, sepals, the upper portion of the styles, and seed coats, but not in developing embryos.

It localises to the endoplasmic reticulum membrane. It carries out the reaction a very-long-chain acyl-CoA + malonyl-CoA + H(+) = a very-long-chain 3-oxoacyl-CoA + CO2 + CoA. Its pathway is lipid metabolism; fatty acid biosynthesis. In terms of biological role, involved in the elongation of C22 to C24 fatty acids, which are precursors for the biosynthesis of cuticular waxes, aliphatic suberins, and membrane lipids, including sphingolipids and phospholipids. This is 3-ketoacyl-CoA synthase 9 from Arabidopsis thaliana (Mouse-ear cress).